Consider the following 179-residue polypeptide: ATP synthase subunit delta (179 aa).

It belongs to the ATPase delta chain family. F-type ATPases have 2 components, F(1) - the catalytic core - and F(0) - the membrane proton channel. F(1) has five subunits: alpha(3), beta(3), gamma(1), delta(1), epsilon(1). F(0) has three main subunits: a(1), b(2) and c(10-14). The alpha and beta chains form an alternating ring which encloses part of the gamma chain. F(1) is attached to F(0) by a central stalk formed by the gamma and epsilon chains, while a peripheral stalk is formed by the delta and b chains.

It localises to the cell inner membrane. F(1)F(0) ATP synthase produces ATP from ADP in the presence of a proton or sodium gradient. F-type ATPases consist of two structural domains, F(1) containing the extramembraneous catalytic core and F(0) containing the membrane proton channel, linked together by a central stalk and a peripheral stalk. During catalysis, ATP synthesis in the catalytic domain of F(1) is coupled via a rotary mechanism of the central stalk subunits to proton translocation. Its function is as follows. This protein is part of the stalk that links CF(0) to CF(1). It either transmits conformational changes from CF(0) to CF(1) or is implicated in proton conduction. The polypeptide is ATP synthase subunit delta (Paraburkholderia phymatum (strain DSM 17167 / CIP 108236 / LMG 21445 / STM815) (Burkholderia phymatum)).